A 705-amino-acid chain; its full sequence is Dolichyl-diphosphooligosaccharide--protein glycosyltransferase subunit STT3A (705 aa).

Residues Met1–Asp15 are Cytoplasmic-facing. The chain crosses the membrane as a helical span at residues Thr16–Arg34. Over Leu35–Asp111 the chain is Lumenal. Positions Glu47–Asp49 match the DXD motif 1 motif. Asp49 serves as a coordination point for Mn(2+). The chain crosses the membrane as a helical span at residues Ile112 to Ala141. Position 142 (Gly142) is a topological domain, cytoplasmic. Residues Ala143–Ile158 traverse the membrane as a helical segment. Topologically, residues Ser159–Gly170 are lumenal. The Mn(2+) site is built by Asp167 and Glu169. The short motif at Asp167 to Glu169 is the DXD motif 2 element. A helical membrane pass occupies residues Ile171–Lys188. At Thr189 to Ser191 the chain is on the cytoplasmic side. The chain crosses the membrane as a helical span at residues Ile192 to Ser207. Residues Ser208–Gly210 lie on the Lumenal side of the membrane. The chain crosses the membrane as a helical span at residues Gly211–Thr229. Over Gly230 to His234 the chain is Cytoplasmic. A helical transmembrane segment spans residues Arg235–Gln253. Topologically, residues Ile254–Ser265 are lumenal. A helical membrane pass occupies residues Glu266–Val283. The Cytoplasmic portion of the chain corresponds to Asp284 to Leu298. A helical transmembrane segment spans residues Phe299–Leu317. Over Met318–Thr356 the chain is Lumenal. An SVSE motif motif is present at residues Ser348–Glu351. Residues Trp357 to Phe379 form a helical membrane-spanning segment. Residues Ser380–Ala385 lie on the Cytoplasmic side of the membrane. Residues Arg386 to Val402 traverse the membrane as a helical segment. Over Met403 to Leu406 the chain is Lumenal. Arg405 is a dolichyl diphosphooligosaccharide binding site. The chain crosses the membrane as a helical span at residues Met407–Thr428. Over Tyr429–Lys453 the chain is Cytoplasmic. The chain crosses the membrane as a helical span at residues Asn454 to Phe473. Topologically, residues His474–Thr705 are lumenal. An interacts with target acceptor peptide in protein substrate region spans residues Trp525–Asp527. Positions Trp525–Gly529 match the WWDYG motif motif. Tyr530 is a dolichyl diphosphooligosaccharide binding site. N-linked (GlcNAc...) asparagine glycans are attached at residues Asn537 and Asn544. Asn548 is a glycosylation site (N-linked (GlcNAc...) (high mannose) asparagine). The DK motif signature appears at Asp592–Met599.

Belongs to the STT3 family. As to quaternary structure, component of the oligosaccharyltransferase (OST) complex. There are 2 OST complexes, OST-A and OST-B, which contain STT3A or STT3B as catalytic subunit, respectively. OST-A and OST-B contain common core subunits RPN1, RPN2, OST48, OST4, DAD1 and TMEM258, and OST-A contains DC2/OSTC and KRTCAP2/KCP2 specific accessory subunits. OST-A complex assembly occurs through the formation of 3 subcomplexes. Subcomplex 1 contains RPN1 and TMEM258, subcomplex 2 contains the OST-A-specific subunits STT3A, DC2/OSTC, and KCP2 as well as the core subunit OST4, and subcomplex 3 contains RPN2, DAD1, and OST48. The OST-A complex can form stable complexes with the Sec61 complex or with both the Sec61 and TRAP complexes. Mg(2+) serves as cofactor. It depends on Mn(2+) as a cofactor.

It localises to the endoplasmic reticulum membrane. It catalyses the reaction a di-trans,poly-cis-dolichyl diphosphooligosaccharide + L-asparaginyl-[protein] = N(4)-(oligosaccharide-(1-&gt;4)-N-acetyl-beta-D-glucosaminyl-(1-&gt;4)-N-acetyl-beta-D-glucosaminyl)-L-asparaginyl-[protein] + a di-trans,poly-cis-dolichyl diphosphate + H(+). It functions in the pathway protein modification; protein glycosylation. Catalytic subunit of the oligosaccharyl transferase (OST) complex that catalyzes the initial transfer of a defined glycan (Glc(3)Man(9)GlcNAc(2) in eukaryotes) from the lipid carrier dolichol-pyrophosphate to an asparagine residue within an Asn-X-Ser/Thr consensus motif in nascent polypeptide chains, the first step in protein N-glycosylation. N-glycosylation occurs cotranslationally and the complex associates with the Sec61 complex at the channel-forming translocon complex that mediates protein translocation across the endoplasmic reticulum (ER). All subunits are required for a maximal enzyme activity. This subunit contains the active site and the acceptor peptide and donor lipid-linked oligosaccharide (LLO) binding pockets. STT3A is present in the majority of OST complexes and mediates cotranslational N-glycosylation of most sites on target proteins, while STT3B-containing complexes are required for efficient post-translational glycosylation and mediate glycosylation of sites that have been skipped by STT3A. STT3A-containing OST-A complex is also required to prevent hyperglycosylation of some target proteins by preventing glycosylation of facultative sites before folding of target proteins is completed. The polypeptide is Dolichyl-diphosphooligosaccharide--protein glycosyltransferase subunit STT3A (Canis lupus familiaris (Dog)).